A 215-amino-acid polypeptide reads, in one-letter code: Cytochrome b6 (215 aa).

Residues 32-52 (IFYCLGGITLTCFLVQVATGF) form a helical membrane-spanning segment. Position 35 (cysteine 35) interacts with heme c. Heme b-binding residues include histidine 86 and histidine 100. 3 consecutive transmembrane segments (helical) span residues 90 to 110 (ASMMVLMMILHVFRVYLTGGF), 116 to 136 (LTWVTGVILAVLTVSFGVTGY), and 186 to 206 (LHTFVSPLLTAVFMLMHFLMI). Residues histidine 187 and histidine 202 each contribute to the heme b site.

It belongs to the cytochrome b family. PetB subfamily. As to quaternary structure, the 4 large subunits of the cytochrome b6-f complex are cytochrome b6, subunit IV (17 kDa polypeptide, PetD), cytochrome f and the Rieske protein, while the 4 small subunits are PetG, PetL, PetM and PetN. The complex functions as a dimer. The cofactor is heme b. Heme c serves as cofactor.

The protein localises to the plastid. It localises to the chloroplast thylakoid membrane. In terms of biological role, component of the cytochrome b6-f complex, which mediates electron transfer between photosystem II (PSII) and photosystem I (PSI), cyclic electron flow around PSI, and state transitions. The protein is Cytochrome b6 of Huperzia lucidula (Shining clubmoss).